We begin with the raw amino-acid sequence, 862 residues long: Cadherin-related family member 5 (862 aa).

The signal sequence occupies residues 1–28 (MGAPALLWPPLLLPLLTVLFGHLPGTLA). The Extracellular segment spans residues 29–671 (QAQVCSANQT…GQRFSTVDMA (643 aa)). Asparagine 36, asparagine 45, asparagine 135, asparagine 173, asparagine 201, asparagine 311, asparagine 408, asparagine 438, and asparagine 479 each carry an N-linked (GlcNAc...) asparagine glycan. 4 consecutive Cadherin domains span residues 40 to 127 (FTMN…APEF), 128 to 240 (PFTI…TPWF), 252 to 357 (IQAQ…PLQF), and 358 to 462 (SQSL…PPST). A disordered region spans residues 452–658 (IQVSEREPPS…TTGPISGVGE (207 aa)). Residues 461-500 (STESPTPPEAGGTTGPSSNTTLETPSTSGTSQGPATTSSG) show a composition bias toward low complexity. Residues 529 to 652 (LGISTSPQTA…GTSQPTTTGP (124 aa)) are compositionally biased toward polar residues. 3 consecutive repeat copies span residues 545-575 (TQTPKPGTSQPMVPTPGASTSSQPATPSGSS), 576-606 (TQTPKPGTSQPMVPTPGASTSSQPATPSGSS), and 607-636 (TQTPRPGTSQPMVPTPGASTSSQPATPSGS). The tract at residues 545-648 (TQTPKPGTSQ…TPKPGTSQPT (104 aa)) is 4 X 31 AA approximate tandem repeats. A 4; truncated repeat occupies 637-648 (TQTPKPGTSQPT). The chain crosses the membrane as a helical span at residues 672–692 (VLGGVLGALLLLALIFLIILI). The Cytoplasmic portion of the chain corresponds to 693–862 (HKHYRHRFTC…LGAVADNTYV (170 aa)). The mediates interaction with USH1C and MYO7B and is required for proper localization to microvilli tips and function in microvilli organization stretch occupies residues 693–862 (HKHYRHRFTC…LGAVADNTYV (170 aa)). 2 disordered regions span residues 706-803 (KAKE…EGGY) and 821-862 (LNEP…NTYV). A phosphoserine mark is found at serine 729, serine 751, and serine 755. Residues 739 to 768 (GPEPVQPPLRPPSPMSSSPTPPSSMPPSPQ) show a composition bias toward pro residues. Threonine 758 is subject to Phosphothreonine. A phosphoserine mark is found at serine 766 and serine 783. Residues 791–801 (LTKERRPEGEG) are compositionally biased toward basic and acidic residues. The residue at position 825 (threonine 825) is a Phosphothreonine. A compositionally biased stretch (low complexity) spans 827 to 837 (DVDSASASGSE). Serine 832, serine 834, and serine 836 each carry phosphoserine.

As to quaternary structure, part of the IMAC/intermicrovillar adhesion complex/intermicrovillar tip-link complex composed of ANKS4B, MYO7B, USH1C, CDHR2 and CDHR5. Interacts (via cytoplasmic domain) with USH1C and MYO7B; required for proper localization of CDHR5 to microvilli tips and its function in brush border differentiation. N- and O-glycosylated. Expressed predominantly in kidney. Also detected in lung and small intestine.

Its subcellular location is the apical cell membrane. It localises to the cell projection. It is found in the microvillus membrane. Functionally, intermicrovillar adhesion molecule that forms, via its extracellular domain, calcium-dependent heterophilic complexes with CDHR2 on adjacent microvilli. Thereby, controls the packing of microvilli at the apical membrane of epithelial cells. Through its cytoplasmic domain, interacts with microvillus cytoplasmic proteins to form the intermicrovillar adhesion complex/IMAC. This complex plays a central role in microvilli and epithelial brush border differentiation. The polypeptide is Cadherin-related family member 5 (Rattus norvegicus (Rat)).